The chain runs to 292 residues: 33 kDa chaperonin (292 aa).

2 disulfide bridges follow: Cys230–Cys232 and Cys263–Cys266.

It belongs to the HSP33 family. In terms of processing, under oxidizing conditions two disulfide bonds are formed involving the reactive cysteines. Under reducing conditions zinc is bound to the reactive cysteines and the protein is inactive.

It localises to the cytoplasm. Functionally, redox regulated molecular chaperone. Protects both thermally unfolding and oxidatively damaged proteins from irreversible aggregation. Plays an important role in the bacterial defense system toward oxidative stress. This Escherichia coli O7:K1 (strain IAI39 / ExPEC) protein is 33 kDa chaperonin.